A 239-amino-acid polypeptide reads, in one-letter code: MNSNTHAKSSNFHQSELDKFAALANRWWDADGPQKPLHALNPVRLEYVSTRLELAGARVLDVGCGGGLLSESMARLGAQVTAIDLAPELVKVARLHSLESGVQVDYRVQSVEDLAAEQPGSFDTVTCMEMLEHVPDPTAIIRACASLLKPGGKLFLSTLNRTPAAFALAVVGAEYIARLLPKGTHHYKDFIKPAELAAWLRNAGLQLEDVSGMLYEPWRNRARLSSRTEVNYLAYAVKP.

Residues Arg44, Gly63, Asp84, and Met128 each coordinate S-adenosyl-L-methionine.

It belongs to the methyltransferase superfamily. UbiG/COQ3 family.

It catalyses the reaction a 3-demethylubiquinol + S-adenosyl-L-methionine = a ubiquinol + S-adenosyl-L-homocysteine + H(+). The enzyme catalyses a 3-(all-trans-polyprenyl)benzene-1,2-diol + S-adenosyl-L-methionine = a 2-methoxy-6-(all-trans-polyprenyl)phenol + S-adenosyl-L-homocysteine + H(+). It participates in cofactor biosynthesis; ubiquinone biosynthesis. Its function is as follows. O-methyltransferase that catalyzes the 2 O-methylation steps in the ubiquinone biosynthetic pathway. The protein is Ubiquinone biosynthesis O-methyltransferase of Xanthomonas euvesicatoria pv. vesicatoria (strain 85-10) (Xanthomonas campestris pv. vesicatoria).